A 2534-amino-acid chain; its full sequence is Highly reducing polyketide synthase easB (2534 aa).

The disordered stretch occupies residues 1–49 (MSPASRSRVEIADSESDSERLSSSPWSILSDNDSNTSDERSTRAGPGSL). Positions 49-470 (LEPIAVIGIG…GTNAHVIIDA (422 aa)) constitute a Ketosynthase family 3 (KS3) domain. Residues cysteine 222, histidine 356, and histidine 396 each act as for beta-ketoacyl synthase activity in the active site. The interval 587–885 (IFSGQGAQYA…LSGPVNQILK (299 aa)) is malonyl-CoA:ACP transacylase (MAT) domain. The segment at 973–1111 (HELLGTLSAD…GLVQAEVDSV (139 aa)) is N-terminal hotdog fold. The tract at residues 973 to 1273 (HELLGTLSAD…QGIRVTSLGG (301 aa)) is dehydratase (DH) domain. Residues 973-1277 (HELLGTLSAD…VTSLGGDVAA (305 aa)) form the PKS/mFAS DH domain. Histidine 1005 serves as the catalytic Proton acceptor; for dehydratase activity. The tract at residues 1131-1277 (THGTIPQKFY…VTSLGGDVAA (147 aa)) is C-terminal hotdog fold. Residue aspartate 1193 is the Proton donor; for dehydratase activity of the active site. The tract at residues 1395 to 1625 (KTSALSLLTK…VFISTAPFPR (231 aa)) is methyltransferase (CMet) domain. Residues 1834–2146 (GLLETIRWKD…AGKHTGKIVL (313 aa)) form an enoyl reductase (ER) domain region. The Carrier domain occupies 2452–2529 (EAVHIVTNAI…QLAAIVAKES (78 aa)). A ketoreductase (KR) domain region spans residues 2453–2526 (AVHIVTNAIL…SISQLAAIVA (74 aa)). Position 2489 is an O-(pantetheine 4'-phosphoryl)serine (serine 2489).

Its pathway is antibiotic biosynthesis. In terms of biological role, polyketide synthase; part of the gene cluster that mediates the biosynthesis of emericellamides, secondary metabolites acting as antibiotics. The biosynthesis of emericellamides initiates from the highly reducing polyketide synthase easB which catalyzes the formation of the linear polyketide chain. EasB produces several polyketides that can be further processed by the downstream enzymes. The polyketides are released from easB as linear polyketide carboxylic acids, which are converted to CoA thioesters by the acyl-CoA ligase easD. The substrates are then loaded onto the acyltransferase easC, which shuttles them to the first thiolation (T) domain of the nonribosomal peptide synthetase easA. EasA then performs condensation of the polyketides with one glycine, two alanine, one valine and one leucine residues. A last step of cyclization leads to the production of emericellamides. This Emericella nidulans (strain FGSC A4 / ATCC 38163 / CBS 112.46 / NRRL 194 / M139) (Aspergillus nidulans) protein is Highly reducing polyketide synthase easB.